The primary structure comprises 436 residues: 3-ketoacyl-CoA thiolase (436 aa).

The Acyl-thioester intermediate role is filled by C99. Active-site proton acceptor residues include H392 and C422.

The protein belongs to the thiolase-like superfamily. Thiolase family. Heterotetramer of two alpha chains (FadJ) and two beta chains (FadI).

It localises to the cytoplasm. It catalyses the reaction an acyl-CoA + acetyl-CoA = a 3-oxoacyl-CoA + CoA. It functions in the pathway lipid metabolism; fatty acid beta-oxidation. Catalyzes the final step of fatty acid oxidation in which acetyl-CoA is released and the CoA ester of a fatty acid two carbons shorter is formed. This Shewanella halifaxensis (strain HAW-EB4) protein is 3-ketoacyl-CoA thiolase.